A 79-amino-acid polypeptide reads, in one-letter code: MAYSEKEILDGLAEIIDEIAGVPAAEVTPEKSFVDDLDIDSLSMVEIAVAAQDKFGVEIPDDQLKDLKTVQDVINYIQK.

The 74-residue stretch at 6–79 (KEILDGLAEI…VQDVINYIQK (74 aa)) folds into the Carrier domain. Serine 41 is subject to O-(pantetheine 4'-phosphoryl)serine.

It belongs to the acyl carrier protein (ACP) family. In terms of processing, 4'-phosphopantetheine is transferred from CoA to a specific serine of apo-ACP by AcpS. This modification is essential for activity because fatty acids are bound in thioester linkage to the sulfhydryl of the prosthetic group.

It localises to the cytoplasm. Its pathway is lipid metabolism; fatty acid biosynthesis. Carrier of the growing fatty acid chain in fatty acid biosynthesis. This is Acyl carrier protein from Thermobifida fusca (strain YX).